The primary structure comprises 1297 residues: Cingulin-like protein 1 (1297 aa).

The segment at 1-550 (MELYFGEYQH…ELTQQTNEET (550 aa)) is head. The ZIM signature appears at 37 to 51 (AGSYGVSIRVQGIDG). Phosphoserine is present on residues S113, S203, and S257. Disordered stretches follow at residues 161–208 (NEVN…TSED), 245–306 (GVGE…TPTS), 364–396 (KPGL…AFPF), and 428–467 (QRSV…DGKV). Over residues 197 to 206 (YGSQPNSPTS) the composition is skewed to polar residues. The span at 268-283 (ETKKNRPDVLPFRRQD) shows a compositional bias: basic and acidic residues. Phosphoserine occurs at positions 284, 298, and 299. Over residues 297-306 (SSSSSTTPTS) the composition is skewed to low complexity. The span at 367-378 (LQRRGRSGKRNR) shows a compositional bias: basic residues. A compositionally biased stretch (basic and acidic residues) spans 379–389 (INPDDRKRSRS). S389 and S392 each carry phosphoserine. S482 carries the post-translational modification Phosphoserine. The tract at residues 586 to 608 (SRAAGSAQGSNQAPNSPSEGNSL) is disordered. Positions 592 to 608 (AQGSNQAPNSPSEGNSL) are enriched in polar residues. The stretch at 604–1251 (EGNSLLDQKN…LQGQLNSLKK (648 aa)) forms a coiled coil. S678 and S704 each carry phosphoserine. The segment at 1259 to 1297 (SSKVLDDSDDDDLSSDAGSLYEAPLSYAFPKDSTIASQI) is tail.

Belongs to the cingulin family. In terms of assembly, homodimer or oligomer. Interacts with CD2AP and SH3BP1; probably part of a complex at cell junctions. Widely expressed. Highly expressed in the kidney and lung.

It localises to the cell junction. Its subcellular location is the tight junction. Functionally, may be involved in anchoring the apical junctional complex, especially tight junctions, to actin-based cytoskeletons. The sequence is that of Cingulin-like protein 1 from Mus musculus (Mouse).